The primary structure comprises 1033 residues: Isoleucine--tRNA ligase 2 (1033 aa).

A 'HIGH' region motif is present at residues 47–57; that stretch reads PTANGLPHVGH. The 'KMSKS' region motif lies at 590–594; the sequence is KMSKS. Lysine 593 provides a ligand contact to ATP.

This sequence belongs to the class-I aminoacyl-tRNA synthetase family. IleS type 2 subfamily. Monomer. Zn(2+) serves as cofactor.

It localises to the cytoplasm. The catalysed reaction is tRNA(Ile) + L-isoleucine + ATP = L-isoleucyl-tRNA(Ile) + AMP + diphosphate. Its function is as follows. Catalyzes the attachment of isoleucine to tRNA(Ile). As IleRS can inadvertently accommodate and process structurally similar amino acids such as valine, to avoid such errors it has two additional distinct tRNA(Ile)-dependent editing activities. One activity is designated as 'pretransfer' editing and involves the hydrolysis of activated Val-AMP. The other activity is designated 'posttransfer' editing and involves deacylation of mischarged Val-tRNA(Ile). In Bacillus cereus (strain ATCC 14579 / DSM 31 / CCUG 7414 / JCM 2152 / NBRC 15305 / NCIMB 9373 / NCTC 2599 / NRRL B-3711), this protein is Isoleucine--tRNA ligase 2.